Reading from the N-terminus, the 2359-residue chain is MWNNNDGMPLAPPGTGGSMMPPPPAAHPSYTALPPPSNPTPPVEPTPEEAEAKLEEKARKWMQLNSKRYGDKRKFGFVETQKEDMPPEHVRKIIRDHGDMSSKKFRHDKRVYLGALKFVPHAVFKLLENMPMPWEQVRDVKVLYHITGAITFVNEIPWVVEPIYMAQWGTMWIMMRREKRDRRHFKRMRFPPFDDEEPPLDYADNLLDVDPLEPIQLELDEEEDSAVHTWFYDHKPLVKTKLINGPSYRRWNLSLPIMATLHRLAGQLLSDLIDRNYFYLFDMPSFFTAKALNMCIPGGPKFEPLYRDMEKGDEDWNEFNDINKLIIRSPLRTEYRIAFPHLYNNRPRKVKLCVYHSPMIMYIKTEDPDLPAFYYDPLIHPISNTNKEKRERKVYDDEDDFALPEGVEPLLRDTQLYTDTTAAGISLLFAPRPFNMRSGRTRRAEDIPLVSEWFKEHCPPAYPVKVRVSYQKLLKCYVLNELHHRPPKAQKKKHLFRSLAATKFFQSTELDWVEVGLQVCRQGYNMLNLLIHRKNLNYLHLDYNFNLKPVKTLTTKERKKSRFGNAFHLCREILRLTKLVVDANVQFRLGNVDAFQLADGLQYIFSHVGQLTGMYRYKYRLMRQIRMCKDLKHLIYYRFNTGPVGKGPGCGFWAPMWRVWLFFLRGIVPLLERWLGNLLARQFEGRHSKGVAKTVTKQRVESHFDLELRAAVMHDVLDAMPEGIKQNKARTILQHLSEAWRCWKANIPWKVPGLPVPIENMILRYVKSKADWWTNVAHYNRERIRRGATVDKTVCRKNLGRLTRLWLKAEQERQHNYLKDGPYVTPEEALAIYTTTVHWLESRKFSPIPFPPLSYKHDTKLLILALERLKESYSVAVRLNQQQREELGLIEQAYDNPHEALSRIKRHLLTQRGFKEVGIEFMDLYSYLIPVYEIEPLEKITDAYLDQYLWYEGDKRHLFPNWIKPADSEPPPLLVYKWCQGINNLQGIWDTGDGQCVVMLQTKFEKFFEKIDLTMLNRLLRLVLDHNIADYVSAKNNVVLSYKDMSHTNSYGLIRGLQFASFVVQFYGLLLDLLLLGLTRASEIAGPPQMPNEFMTFWDTKVETRHPIRLYSRYIDKVHIMFKFTHEEARDLIQRYLTEHPDPNNENMVGYNNKKCWPRDARMRLMKHDVNLGRSVFWDMKNRLPRSITTLEWENGFVSVYSKDNPNLLFSMCGFEVRILPKIRMTQEAFSNTKDGVWNLQNEQTKERTAVAFLRVDDEHMKVFENRVRQILMSSGSTTFTKIVNKWNTALIGLMTYFREATVHTQELLDLLVKCENKIQTRIKIGLNSKMPSRFPPVIFYTPKEIGGLGMLSMGHILIPQSDLRYSKQTDVGVTHFRSGMSHEEDQLIPNLYRYIQPWESEFIDSQRVWAEYALKRQEAQAQNRRLTLEDLEDSWDRGIPRINTLFQKDRHTLAYDKGWRVRTDFKQYQVLKQNPFWWTHQRHDGKLWNLNNYRTDVIQALGGVEGILEHTLFKGTYFPTWEGLFWEKASGFEESMKYKKLTNAQRSGLNQIPNRRFTLWWSPTINRANVYVGFQVQLDLTGIFMHGKIPTLKISLIQIFRAHLWQKIHESVVMDLCQVLDQELDALEIETVQKETIHPRKSYKMNSSCADVLLFAAHKWPMSKPSLVAESKDMFDQKASNKYWIDVQLRWGDYDSHDIERYTRAKFMDYTTDNMSIYPSPTGVMIGLDLAYNLHSAFGNWFPGSKPLLAQAMNKIMKSNPALYVLRERIRKGLQLYSSEPTEPYLSSQNYGEIFSNQIIWFVDDTNVYRVTIHKTFEGNLTTKPINGAIFIFNPRTGQLFLKVIHTSVWAGQKRLGQLAKWKTAEEVAALVRSLPVEEQPKQIIVTRKGMLDPLEVHLLDFPNIVIKGSELQLPFQACLKIEKFGDLILKATEPQMVLFNIYDDWLKSISSYTAFSRLILILRALHVNNEKAKMLLKPDKSVVTEPHHIWPSLTDDQWMKVEVALRDLILSDYAKKNNVNTSALTQSEIRDIILGAEITPPSQQRQQIAEIEKQAKEASQLTAVTTRTTNVHGDELIVTTTSPYEQSAFGSKTDWRVRAISATNLYLRVNHIYVNSDDIKETGYTYIMPKNILKKFICVADLRTQIAGYLYGISPPDNPQVKEIRCVVMVPQWGNHQLVHLPSSLPEHDFLNDLEPLGWLHTQPNELPQLSPQDVTSHSRILENNKQWDGEKCIILTCSFTPGSCSLTSYKLTQTGYEWGRLNKDNGSNPHGYLPTHYEKVQMLLSDRFLGFYMVPESGPWNYSFTGVKHTLSMKYSVKLGSPKEFYHEEHRPTHFLEFSNMEEADITEGDREDTFT.

A disordered region spans residues 1–54 (MWNNNDGMPLAPPGTGGSMMPPPPAAHPSYTALPPPSNPTPPVEPTPEEAEAKL). A compositionally biased stretch (pro residues) spans 33 to 45 (LPPPSNPTPPVEP). The 132-residue stretch at 2127-2258 (TYIMPKNILK…LTSYKLTQTG (132 aa)) folds into the MPN domain.

In terms of assembly, interacts with CLO.

It localises to the nucleus. In terms of biological role, functions as a scaffold that mediates the ordered assembly of spliceosomal proteins and snRNAs. Required for the assembly of the U4/U6-U5 tri-snRNP complex. Required for embryo development. Required for splicing efficiency of COOLAIR introns and usage of the proximal poly(A) site. COOLAIR is a set of long non-coding antisense transcripts produced at the FLOWERING LOCUS C (FLC). COOLAIR initiates just downstream of the major sense transcript poly(A) site and terminates either early or extends into the FLC promoter region. Splicing of COOLAIR by PRP8A is functionally important for FLC regulation. This is Pre-mRNA-processing-splicing factor 8A from Arabidopsis thaliana (Mouse-ear cress).